A 423-amino-acid chain; its full sequence is Lipoamide acyltransferase component of branched-chain alpha-keto acid dehydrogenase complex (423 aa).

A Lipoyl-binding domain is found at 3–78 (THVIKMPDIG…AVGSELIRIE (76 aa)). Residue K44 is modified to N6-lipoyllysine. Residues 137–174 (LASPAVRKRALDAGIELRYVHGSGPAGRILHEDLDAFM) enclose the Peripheral subunit-binding (PSBD) domain. Active-site residues include H395 and D399.

Belongs to the 2-oxoacid dehydrogenase family. As to quaternary structure, forms a 24-polypeptide structural core with octahedral symmetry. (R)-lipoate serves as cofactor.

It carries out the reaction N(6)-[(R)-dihydrolipoyl]-L-lysyl-[protein] + 2-methylpropanoyl-CoA = N(6)-[(R)-S(8)-2-methylpropanoyldihydrolipoyl]-L-lysyl-[protein] + CoA. The branched-chain alpha-keto dehydrogenase complex catalyzes the overall conversion of alpha-keto acids to acyl-CoA and CO(2). It contains multiple copies of three enzymatic components: branched-chain alpha-keto acid decarboxylase (E1), lipoamide acyltransferase (E2) and lipoamide dehydrogenase (E3). This chain is Lipoamide acyltransferase component of branched-chain alpha-keto acid dehydrogenase complex (bkdB), found in Pseudomonas putida (Arthrobacter siderocapsulatus).